The primary structure comprises 178 residues: Fatty-acid and retinol-binding protein 1 (178 aa).

Positions 1-16 (MYHQLILMALIGVIMA) are cleaved as a signal peptide. N-linked (GlcNAc...) asparagine glycans are attached at residues Asn44 and Asn75. Coiled-coil stretches lie at residues 67–89 (DAAL…ELRN) and 122–154 (QKLD…LKAT). Asn157 is a glycosylation site (N-linked (GlcNAc...) asparagine).

This sequence belongs to the fatty-acid and retinol-binding protein (FARBP) family. In terms of processing, N-glycosylated.

Its subcellular location is the secreted. Its function is as follows. Binds retinol and different fatty acids. The polypeptide is Fatty-acid and retinol-binding protein 1 (Onchocerca ochengi (Filarial nematode worm)).